A 487-amino-acid chain; its full sequence is Glutamyl-tRNA(Gln) amidotransferase subunit A (487 aa).

Active-site charge relay system residues include Lys-77 and Ser-152. Ser-176 serves as the catalytic Acyl-ester intermediate.

It belongs to the amidase family. GatA subfamily. In terms of assembly, heterotrimer of A, B and C subunits.

The enzyme catalyses L-glutamyl-tRNA(Gln) + L-glutamine + ATP + H2O = L-glutaminyl-tRNA(Gln) + L-glutamate + ADP + phosphate + H(+). Its function is as follows. Allows the formation of correctly charged Gln-tRNA(Gln) through the transamidation of misacylated Glu-tRNA(Gln) in organisms which lack glutaminyl-tRNA synthetase. The reaction takes place in the presence of glutamine and ATP through an activated gamma-phospho-Glu-tRNA(Gln). The protein is Glutamyl-tRNA(Gln) amidotransferase subunit A of Limosilactobacillus fermentum (strain NBRC 3956 / LMG 18251) (Lactobacillus fermentum).